Reading from the N-terminus, the 269-residue chain is Major capsid protein P2 (269 aa).

Homotrimer.

The protein resides in the virion. In terms of biological role, major capsid protein. This chain is Major capsid protein P2 (II), found in Pseudoalteromonas phage PM2 (Bacteriophage PM2).